The primary structure comprises 683 residues: MKPSWLQCRKVTGAGTLGAPLPGSPSVRGAGVARRALVAGFGGRGCRALTTSSGGGEYKTHFAASVADPERFWGKAAEQISWYKPWTKTLENRYPPSTSWFVEGMLNICYNAIDRHIENGQGDKIAIIYDSPVTDTKATISYKEVLEQVSKLAGVLVKQGVKKGDTVVIYMPMIPQAIYAMLACARIGAIHSLIFGGFASKELSTRIDHVKPKVVVTASFGIEPGRKVEYMPLLEEALRIGQHKPDRLLIYNRPNMEKVPLMSGRDLDWEEEMAKAQSHDCVPVLSEHPLYILYTSGTTGLPKGVVRPTGGYAVMLNWTMSSIYGLKPGEVWWAASDLGWVVGHSYICYGPLLHGNTTVLYEGKPVGTPDAGAYFRVLAEHGVAALFTAPTAIRAIRQQDPGAALGKQYSLTRFKTLFVAGERCDVETLEWSKKVFRVPVLDHWWQTETGSPITASCIGLGNSKTPPPGQAGKCVPGYNVMILDDNMQKLKARSLGNIVVKLPLPPGAFSGLWKNQEAFKHLYFEKFPGYYDTMDAGYMDEEGYLYVMSRVDDVINVAGHRISAGAIEESVLSHGTVTDCAVVGKEDPLKGHVPLALCVLKKDVNATEEQVLEEIVKHVRQSIGPVAAFRNAVFVKQLPKTRSGKIPRSTLSALVNGKPYKVTPTIEDPSIFGHIEEVLKQAL.

A mitochondrion-targeting transit peptide spans 1–29; that stretch reads MKPSWLQCRKVTGAGTLGAPLPGSPSVRG. A CoA-binding site is contributed by 223–226; that stretch reads EPGR. Residues 421 to 423 and 442 to 447 each bind ATP; these read GER and DHWWQT. Position 514 is an N6-succinyllysine (Lys-514). At Lys-520 the chain carries N6-acetyllysine. The ATP site is built by Asp-535, Arg-550, and Arg-561. Residue Arg-620 participates in CoA binding.

Belongs to the ATP-dependent AMP-binding enzyme family. In terms of tissue distribution, expressed in a wide range of tissues, with the highest levels observed in the liver followed by kidney.

It localises to the mitochondrion matrix. It catalyses the reaction acetate + ATP + CoA = acetyl-CoA + AMP + diphosphate. The enzyme catalyses propanoate + ATP + CoA = propanoyl-CoA + AMP + diphosphate. The catalysed reaction is butanoate + ATP + CoA = butanoyl-CoA + AMP + diphosphate. Its function is as follows. Catalyzes the synthesis of acetyl-CoA from short-chain fatty acids. Propionate is the preferred substrate but can also utilize acetate and butyrate with a much lower affinity. The protein is Acyl-CoA synthetase short-chain family member 3, mitochondrial (Acss3) of Rattus norvegicus (Rat).